The primary structure comprises 320 residues: Thioredoxin reductase (320 aa).

Position 36-43 (36-43) interacts with FAD; that stretch reads TGMEQGGQ. A disulfide bridge connects residues Cys-136 and Cys-139. An FAD-binding site is contributed by 287–296; sequence DVTDHVYRQA.

It belongs to the class-II pyridine nucleotide-disulfide oxidoreductase family. Homodimer. Requires FAD as cofactor.

The protein localises to the cytoplasm. It catalyses the reaction [thioredoxin]-dithiol + NADP(+) = [thioredoxin]-disulfide + NADPH + H(+). The chain is Thioredoxin reductase (trxB) from Coxiella burnetii (strain RSA 493 / Nine Mile phase I).